The sequence spans 409 residues: Elongation factor Tu (409 aa).

The tr-type G domain occupies 10–214 (KPHVNVGTIG…AVDSYIPTPE (205 aa)). Residues 19–26 (GHVDHGKT) are G1. Residue 19–26 (GHVDHGKT) coordinates GTP. A Mg(2+)-binding site is contributed by Thr-26. The interval 60 to 64 (GITIN) is G2. The tract at residues 81-84 (DCPG) is G3. Residues 81-85 (DCPGH) and 136-139 (NKVD) each bind GTP. Positions 136–139 (NKVD) are G4. Residues 174 to 176 (SAL) are G5.

This sequence belongs to the TRAFAC class translation factor GTPase superfamily. Classic translation factor GTPase family. EF-Tu/EF-1A subfamily. As to quaternary structure, monomer.

The protein localises to the cytoplasm. The enzyme catalyses GTP + H2O = GDP + phosphate + H(+). Functionally, GTP hydrolase that promotes the GTP-dependent binding of aminoacyl-tRNA to the A-site of ribosomes during protein biosynthesis. The sequence is that of Elongation factor Tu from Synechococcus sp. (strain JA-3-3Ab) (Cyanobacteria bacterium Yellowstone A-Prime).